The sequence spans 198 residues: uncharacterized protein (198 aa).

This is an uncharacterized protein from Bacillus subtilis (strain 168).